Consider the following 279-residue polypeptide: MTTAAPTPSLFGQCLAEFLGTALLIFFGTGCVAALKVAGASFGLWEISIIWGVGVSMAIYLSAGVSGAHLNPAVSIALWLFAGFEGRKLPFYITAQVAGAFCAAALVYTLYSSLFIEFEQAQNIVRGSQDSLALASVFSTYPHPALSVGQAFLVEVVITAILMAVIMALTDDGNGLPRGPLAPLLIGLLIAVIGSAMGPLTGFAMNPARDFGPKLMTYLAGWGPIAFTGGREIPYFLVPIFAPILGACLGAGGYRVLIARHLPSAAAPAEAEPEKVRAS.

At 1-8 the chain is on the cytoplasmic side; the sequence is MTTAAPTP. The chain crosses the membrane as a helical span at residues 9-37; sequence SLFGQCLAEFLGTALLIFFGTGCVAALKV. The Periplasmic portion of the chain corresponds to 38-42; it reads AGASF. The helical transmembrane segment at 43–63 threads the bilayer; that stretch reads GLWEISIIWGVGVSMAIYLSA. The Cytoplasmic segment spans residues 64–66; the sequence is GVS. Residues 67 to 70 lie within the membrane without spanning it; it reads GAHL. Positions 71–73 match the NPA 1 motif; sequence NPA. The segment at residues 71–81 is an intramembrane region (helical); that stretch reads NPAVSIALWLF. The Cytoplasmic portion of the chain corresponds to 82-87; it reads AGFEGR. The helical transmembrane segment at 88 to 111 threads the bilayer; the sequence is KLPFYITAQVAGAFCAAALVYTLY. Over 112–146 the chain is Periplasmic; sequence SSLFIEFEQAQNIVRGSQDSLALASVFSTYPHPAL. Residues 147-172 form a helical membrane-spanning segment; the sequence is SVGQAFLVEVVITAILMAVIMALTDD. At 173 to 180 the chain is on the cytoplasmic side; that stretch reads GNGLPRGP. Residues 181-197 form a helical membrane-spanning segment; it reads LAPLLIGLLIAVIGSAM. Over 198-201 the chain is Periplasmic; the sequence is GPLT. Residues 202–205 lie within the membrane without spanning it; that stretch reads GFAM. The NPA 2 motif lies at 206-208; that stretch reads NPA. Residues 206–219 constitute an intramembrane region (helical); the sequence is NPARDFGPKLMTYL. Residues 220 to 234 lie on the Periplasmic side of the membrane; the sequence is AGWGPIAFTGGREIP. The helical transmembrane segment at 235–257 threads the bilayer; it reads YFLVPIFAPILGACLGAGGYRVL. Residues 258 to 279 lie on the Cytoplasmic side of the membrane; it reads IARHLPSAAAPAEAEPEKVRAS.

This sequence belongs to the MIP/aquaporin (TC 1.A.8) family.

It localises to the cell inner membrane. It carries out the reaction glycerol(in) = glycerol(out). In terms of biological role, mediates glycerol diffusion across the cytoplasmic membrane via a pore-type mechanism. This Pseudomonas aeruginosa (strain ATCC 15692 / DSM 22644 / CIP 104116 / JCM 14847 / LMG 12228 / 1C / PRS 101 / PAO1) protein is Glycerol uptake facilitator protein (glpF).